A 224-amino-acid chain; its full sequence is ATP-dependent dethiobiotin synthetase BioD (224 aa).

12-17 (GVGKTF) contributes to the ATP binding site. T16 lines the Mg(2+) pocket. K37 is an active-site residue. T41 contacts substrate. E107 is a binding site for Mg(2+). ATP-binding positions include 107–110 (EGAG), 167–168 (GS), 197–199 (PEG), and E204.

It belongs to the dethiobiotin synthetase family. Homodimer. The cofactor is Mg(2+).

The protein resides in the cytoplasm. It carries out the reaction (7R,8S)-7,8-diammoniononanoate + CO2 + ATP = (4R,5S)-dethiobiotin + ADP + phosphate + 3 H(+). It functions in the pathway cofactor biosynthesis; biotin biosynthesis; biotin from 7,8-diaminononanoate: step 1/2. Its function is as follows. Catalyzes a mechanistically unusual reaction, the ATP-dependent insertion of CO2 between the N7 and N8 nitrogen atoms of 7,8-diaminopelargonic acid (DAPA, also called 7,8-diammoniononanoate) to form a ureido ring. This is ATP-dependent dethiobiotin synthetase BioD from Corynebacterium glutamicum (strain R).